Reading from the N-terminus, the 430-residue chain is PCI domain-containing protein 2 homolog (430 aa).

One can recognise a PCI domain in the interval 243-424 (ITYRFFNGRL…ALVVSPTNPF (182 aa)).

This sequence belongs to the CSN12 family.

The chain is PCI domain-containing protein 2 homolog (pcid2) from Dictyostelium discoideum (Social amoeba).